Reading from the N-terminus, the 96-residue chain is Large ribosomal subunit protein uL23 (96 aa).

This sequence belongs to the universal ribosomal protein uL23 family. In terms of assembly, part of the 50S ribosomal subunit. Contacts protein L29, and trigger factor when it is bound to the ribosome.

Its function is as follows. One of the early assembly proteins it binds 23S rRNA. One of the proteins that surrounds the polypeptide exit tunnel on the outside of the ribosome. Forms the main docking site for trigger factor binding to the ribosome. The chain is Large ribosomal subunit protein uL23 from Vesicomyosocius okutanii subsp. Calyptogena okutanii (strain HA).